Consider the following 164-residue polypeptide: Nucleotide-binding protein Mfla_1706 (164 aa).

Belongs to the YajQ family.

Functionally, nucleotide-binding protein. The protein is Nucleotide-binding protein Mfla_1706 of Methylobacillus flagellatus (strain ATCC 51484 / DSM 6875 / VKM B-1610 / KT).